Here is a 158-residue protein sequence, read N- to C-terminus: Transcription factor BTF3 homolog 4 (158 aa).

The region spanning 33–98 (TADDKKLQSS…AETKQLTEML (66 aa)) is the NAC-A/B domain. The interval 125–158 (LDNKAPKAEDIDEEDDDVPDLVENFDEASKNEAN) is disordered. Acidic residues predominate over residues 134–150 (DIDEEDDDVPDLVENFD).

The protein belongs to the NAC-beta family.

The sequence is that of Transcription factor BTF3 homolog 4 (btf3l4) from Danio rerio (Zebrafish).